An 807-amino-acid chain; its full sequence is DNA gyrase subunit B (807 aa).

A Toprim domain is found at 429–543 (SELFIVEGDS…KGYLYIAQPP (115 aa)). Positions 435, 508, and 510 each coordinate Mg(2+).

It belongs to the type II topoisomerase GyrB family. In terms of assembly, heterotetramer, composed of two GyrA and two GyrB chains. In the heterotetramer, GyrA contains the active site tyrosine that forms a transient covalent intermediate with DNA, while GyrB binds cofactors and catalyzes ATP hydrolysis. It depends on Mg(2+) as a cofactor. Mn(2+) is required as a cofactor. The cofactor is Ca(2+).

Its subcellular location is the cytoplasm. The catalysed reaction is ATP-dependent breakage, passage and rejoining of double-stranded DNA.. Its function is as follows. A type II topoisomerase that negatively supercoils closed circular double-stranded (ds) DNA in an ATP-dependent manner to modulate DNA topology and maintain chromosomes in an underwound state. Negative supercoiling favors strand separation, and DNA replication, transcription, recombination and repair, all of which involve strand separation. Also able to catalyze the interconversion of other topological isomers of dsDNA rings, including catenanes and knotted rings. Type II topoisomerases break and join 2 DNA strands simultaneously in an ATP-dependent manner. In Rickettsia prowazekii (strain Madrid E), this protein is DNA gyrase subunit B.